Reading from the N-terminus, the 121-residue chain is Large ribosomal subunit protein bL12 (121 aa).

It belongs to the bacterial ribosomal protein bL12 family. In terms of assembly, homodimer. Part of the ribosomal stalk of the 50S ribosomal subunit. Forms a multimeric L10(L12)X complex, where L10 forms an elongated spine to which 2 to 4 L12 dimers bind in a sequential fashion. Binds GTP-bound translation factors.

Its function is as follows. Forms part of the ribosomal stalk which helps the ribosome interact with GTP-bound translation factors. Is thus essential for accurate translation. In Escherichia coli O45:K1 (strain S88 / ExPEC), this protein is Large ribosomal subunit protein bL12.